Here is a 34-residue protein sequence, read N- to C-terminus: Trypsin inhibitor 1 (34 aa).

Residues 1-34 (SGSDGGVCPKILQRCRRDSDCPGACICRGNGYCG) constitute a cross-link (cyclopeptide (Ser-Gly)). Intrachain disulfides connect Cys8/Cys25, Cys15/Cys27, and Cys21/Cys33.

Post-translationally, this is a cyclic peptide.

The protein localises to the secreted. Inhibits trypsin; probably participates in a plant defense mechanism. In Momordica cochinchinensis (Spiny bitter cucumber), this protein is Trypsin inhibitor 1.